We begin with the raw amino-acid sequence, 164 residues long: ATP synthase subunit b 1 (164 aa).

The helical transmembrane segment at 4 to 24 (MELAELWVAVAFFVFVGILLY) threads the bilayer.

The protein belongs to the ATPase B chain family. As to quaternary structure, F-type ATPases have 2 components, F(1) - the catalytic core - and F(0) - the membrane proton channel. F(1) has five subunits: alpha(3), beta(3), gamma(1), delta(1), epsilon(1). F(0) has three main subunits: a(1), b(2) and c(10-14). The alpha and beta chains form an alternating ring which encloses part of the gamma chain. F(1) is attached to F(0) by a central stalk formed by the gamma and epsilon chains, while a peripheral stalk is formed by the delta and b chains.

Its subcellular location is the cell inner membrane. In terms of biological role, f(1)F(0) ATP synthase produces ATP from ADP in the presence of a proton or sodium gradient. F-type ATPases consist of two structural domains, F(1) containing the extramembraneous catalytic core and F(0) containing the membrane proton channel, linked together by a central stalk and a peripheral stalk. During catalysis, ATP synthesis in the catalytic domain of F(1) is coupled via a rotary mechanism of the central stalk subunits to proton translocation. Its function is as follows. Component of the F(0) channel, it forms part of the peripheral stalk, linking F(1) to F(0). The polypeptide is ATP synthase subunit b 1 (Azorhizobium caulinodans (strain ATCC 43989 / DSM 5975 / JCM 20966 / LMG 6465 / NBRC 14845 / NCIMB 13405 / ORS 571)).